The chain runs to 885 residues: Dipeptidyl peptidase 9 (885 aa).

Residues serine 752, aspartate 830, and histidine 862 each act as charge relay system in the active site. Position 752 (serine 752) interacts with Val-boroPro.

Belongs to the peptidase S9B family. DPPIV subfamily. Homodimer. Forms a ternary complex with NLRP1, composed of a DPP9 homodimer, one full-length NLRP1 protein, and one cleaved C-terminus of NLRP1 (NACHT, LRR and PYD domains-containing protein 1, C-terminus).

The protein resides in the nucleus. It catalyses the reaction Release of an N-terminal dipeptide, Xaa-Yaa-|-Zaa-, from a polypeptide, preferentially when Yaa is Pro, provided Zaa is neither Pro nor hydroxyproline.. In terms of biological role, dipeptidyl peptidase that cleaves off N-terminal dipeptides from proteins having a Pro or Ala residue at position 2. Acts as a key inhibitor of the NLRP1 inflammasome. This chain is Dipeptidyl peptidase 9, found in Danio rerio (Zebrafish).